Here is a 487-residue protein sequence, read N- to C-terminus: MNSTNSGPPDSGSATGVVPTPDEIASLLQVEHLLDQRWPETRIDPSLTRISALMDLLGSPQRSYPSIHIAGTNGKTSVARMVDALVTALHRRTGRTTSPHLQSPVERISIDGKPISPAQYVATYREIEPLVALIDQQSQASAGKGGPAMSKFEVLTAMAFAAFADAPVDVAVVEVGMGGRWDATNVINAPVAVITPISIDHVDYLGADIAGIAGEKAGIITRAPDGSPDTVAVIGRQVPKVMEVLLAESVRADASVAREDSEFAVLRRQIAVGGQVLQLQGLGGVYSDIYLPLHGEHQAHNAVLALASVEAFFGAGAQRQLDGDAVRAGFAAVTSPGRLERMRSAPTVFIDAAHNPAGASALAQTLAHEFDFRFLVGVLSVLGDKDVDGILAALEPVFDSVVVTHNGSPRALDVEALALAAGERFGPDRVRTAENLRDAIDVATSLVDDAAADPDVAGDAFSRTGIVITGSVVTAGAARTLFGRDPQ.

44–46 contributes to the 7,8-dihydropteroate binding site; it reads DPS. 74–77 contacts ATP; sequence GKTS. Positions 76 and 98 each coordinate Mg(2+). 150-153 provides a ligand contact to 7,8-dihydropteroate; it reads SKFE. Glu174 is a Mg(2+) binding site. Residue 181-183 participates in 7,8-dihydropteroate binding; the sequence is WDA. Residues His201 and Asp203 each coordinate Mg(2+). ATP contacts are provided by residues Asn301, Arg338, and 351–354; that span reads DAAH. Residue Asp384 participates in Mg(2+) binding.

Belongs to the folylpolyglutamate synthase family. As to quaternary structure, monomer. Mg(2+) serves as cofactor.

It catalyses the reaction 7,8-dihydropteroate + L-glutamate + ATP = 7,8-dihydrofolate + ADP + phosphate + H(+). It carries out the reaction (6S)-5,6,7,8-tetrahydrofolyl-(gamma-L-Glu)(n) + L-glutamate + ATP = (6S)-5,6,7,8-tetrahydrofolyl-(gamma-L-Glu)(n+1) + ADP + phosphate + H(+). The protein operates within cofactor biosynthesis; tetrahydrofolate biosynthesis; 7,8-dihydrofolate from 2-amino-4-hydroxy-6-hydroxymethyl-7,8-dihydropteridine diphosphate and 4-aminobenzoate: step 2/2. It functions in the pathway cofactor biosynthesis; tetrahydrofolylpolyglutamate biosynthesis. In terms of biological role, catalyzes the addition of a glutamate residue to dihydropteroate (7,8-dihydropteroate or H2Pte) to form dihydrofolate (7,8-dihydrofolate monoglutamate or H2Pte-Glu). Also catalyzes successive additions of L-glutamate to tetrahydrofolate, leading to folylpolyglutamate derivatives. Functionally, is involved in the bioactivation of the antituberculous drug para-aminosalicylic acid (PAS). Is able to use hydroxy-dihydropteroate (H2PtePAS) as substrate, which is the product formed by the action of DHPS (FolP1) on PAS, leading to hydroxy-dihydrofolate (H2PtePAS-Glu). This compound inhibits dihydrofolate reductase DHFR (DfrA), the next enzyme in the folate pathway, and thus disrupts the folate-dependent metabolic pathways. The polypeptide is Dihydrofolate synthase/folylpolyglutamate synthase (Mycobacterium tuberculosis (strain ATCC 25618 / H37Rv)).